The primary structure comprises 132 residues: Ribosome-binding factor A (132 aa).

This sequence belongs to the RbfA family. As to quaternary structure, monomer. Binds 30S ribosomal subunits, but not 50S ribosomal subunits or 70S ribosomes.

Its subcellular location is the cytoplasm. Its function is as follows. One of several proteins that assist in the late maturation steps of the functional core of the 30S ribosomal subunit. Associates with free 30S ribosomal subunits (but not with 30S subunits that are part of 70S ribosomes or polysomes). Required for efficient processing of 16S rRNA. May interact with the 5'-terminal helix region of 16S rRNA. The protein is Ribosome-binding factor A of Pseudomonas putida (strain W619).